Consider the following 532-residue polypeptide: Growth factor receptor-bound protein 7 (532 aa).

The span at 1–20 (MELDLSPPHLSSSPEDLCPA) shows a compositional bias: low complexity. The tract at residues 1 to 96 (MELDLSPPHL…PSSARGLLPR (96 aa)) is disordered. A compositionally biased stretch (pro residues) spans 21–34 (PGTPPGTPRPPDTP). A Ras-associating domain is found at 100–186 (RPHVVKVYSE…SRFVFRKNFA (87 aa)). Residues tyrosine 188 and tyrosine 338 each carry the phosphotyrosine; by FAK1 modification. The region spanning 229 to 338 (FPEIQGFLQL…WLAAFRLFKY (110 aa)) is the PH domain. Position 361 is a phosphoserine (serine 361). An SH2 domain is found at 431-527 (WFHGRISREE…ILPCLLRHCC (97 aa)).

This sequence belongs to the GRB7/10/14 family. As to quaternary structure, homodimer. Interacts (via SH2 domain) with EGFR, ERBB2, ERBB3 (when phosphorylated), ERBB4 (when phosphorylated), EPHB1, INSR, FGFR1, PDGFRA (tyrosine phosphorylated) and PDGFRB (tyrosine phosphorylated). Interacts with SHC1. Interacts with RND1. Interacts (when tyrosine phosphorylated) with FHL2 and HAX1. Interacts (via SH2 domain) with RET and PTK2/FAK1. Interacts (when not phosphorylated) with ELAVL1. In stressed cells, but not in normal cells, part of a complex that contains at least GRB7, PTK2/FAK1, STAU1, ELAVL1 and TIA1. Interacts (via SH2 domain) with KIT (phosphorylated). Interacts (via SH2 domain) with TEK/TIE2 (tyrosine phosphorylated). Phosphorylated on serine and threonine residues in response to heregulin. Phosphorylated on tyrosine residues by TEK/TIE2. Phosphorylated on tyrosine residues in response to NTN1 signaling. Phosphorylation promotes stress granule disassembly during recovery after cellular stress. Phosphorylated on tyrosine residues by PTK2/FAK1, and possibly also other kinases. Phosphorylation is enhanced by activation of receptor kinases. Tyrosine phosphorylation is essential for activation of down-stream protein kinases.

The protein resides in the cytoplasm. It is found in the cell junction. The protein localises to the focal adhesion. Its subcellular location is the cell membrane. It localises to the cytoplasmic granule. The protein resides in the cell projection. Adapter protein that interacts with the cytoplasmic domain of numerous receptor kinases and modulates down-stream signaling. Promotes activation of down-stream protein kinases, including STAT3, AKT1, MAPK1 and/or MAPK3. Promotes activation of HRAS. Plays a role in signal transduction in response to EGF. Plays a role in the regulation of cell proliferation and cell migration. Plays a role in the assembly and stability of RNA stress granules. Binds to the 5'UTR of target mRNA molecules and represses translation of target mRNA species, when not phosphorylated. Phosphorylation impairs RNA binding and promotes stress granule disassembly during recovery after cellular stress. The sequence is that of Growth factor receptor-bound protein 7 (GRB7) from Homo sapiens (Human).